The sequence spans 81 residues: UPF0729 protein C18orf32 homolog (81 aa).

Residues 45–58 (AASDQKVSEKSNGT) show a composition bias toward polar residues. Positions 45 to 81 (AASDQKVSEKSNGTCKPESNGEATANGSTIAADKKTD) are disordered.

Belongs to the UPF0729 family.

This chain is UPF0729 protein C18orf32 homolog, found in Anoplopoma fimbria (Sablefish).